The primary structure comprises 142 residues: 3-hydroxyacyl-[acyl-carrier-protein] dehydratase FabZ (142 aa).

His48 is a catalytic residue.

The protein belongs to the thioester dehydratase family. FabZ subfamily.

Its subcellular location is the cytoplasm. The catalysed reaction is a (3R)-hydroxyacyl-[ACP] = a (2E)-enoyl-[ACP] + H2O. In terms of biological role, involved in unsaturated fatty acids biosynthesis. Catalyzes the dehydration of short chain beta-hydroxyacyl-ACPs and long chain saturated and unsaturated beta-hydroxyacyl-ACPs. The protein is 3-hydroxyacyl-[acyl-carrier-protein] dehydratase FabZ of Prochlorococcus marinus (strain MIT 9313).